The chain runs to 169 residues: Large ribosomal subunit protein uL10 (169 aa).

This sequence belongs to the universal ribosomal protein uL10 family. As to quaternary structure, part of the ribosomal stalk of the 50S ribosomal subunit. The N-terminus interacts with L11 and the large rRNA to form the base of the stalk. The C-terminus forms an elongated spine to which L12 dimers bind in a sequential fashion forming a multimeric L10(L12)X complex.

Forms part of the ribosomal stalk, playing a central role in the interaction of the ribosome with GTP-bound translation factors. The sequence is that of Large ribosomal subunit protein uL10 from Lactobacillus delbrueckii subsp. bulgaricus (strain ATCC 11842 / DSM 20081 / BCRC 10696 / JCM 1002 / NBRC 13953 / NCIMB 11778 / NCTC 12712 / WDCM 00102 / Lb 14).